Consider the following 577-residue polypeptide: Proline--tRNA ligase (577 aa).

Belongs to the class-II aminoacyl-tRNA synthetase family. ProS type 1 subfamily. Homodimer.

The protein localises to the cytoplasm. The enzyme catalyses tRNA(Pro) + L-proline + ATP = L-prolyl-tRNA(Pro) + AMP + diphosphate. Catalyzes the attachment of proline to tRNA(Pro) in a two-step reaction: proline is first activated by ATP to form Pro-AMP and then transferred to the acceptor end of tRNA(Pro). As ProRS can inadvertently accommodate and process non-cognate amino acids such as alanine and cysteine, to avoid such errors it has two additional distinct editing activities against alanine. One activity is designated as 'pretransfer' editing and involves the tRNA(Pro)-independent hydrolysis of activated Ala-AMP. The other activity is designated 'posttransfer' editing and involves deacylation of mischarged Ala-tRNA(Pro). The misacylated Cys-tRNA(Pro) is not edited by ProRS. In Helicobacter pylori (strain P12), this protein is Proline--tRNA ligase.